The primary structure comprises 602 residues: RecBCD enzyme subunit RecD (602 aa).

171–178 (GGPGTGKT) lines the ATP pocket.

Belongs to the RecD family. As to quaternary structure, heterotrimer of RecB, RecC and RecD. All subunits contribute to DNA-binding.

It carries out the reaction Couples ATP hydrolysis with the unwinding of duplex DNA at the replication fork by translocating in the 5'-3' direction. This creates two antiparallel DNA single strands (ssDNA). The leading ssDNA polymer is the template for DNA polymerase III holoenzyme which synthesizes a continuous strand.. It catalyses the reaction ATP + H2O = ADP + phosphate + H(+). In terms of biological role, a helicase/nuclease that prepares dsDNA breaks (DSB) for recombinational DNA repair. Binds to DSBs and unwinds DNA via a highly rapid and processive ATP-dependent bidirectional helicase activity. Unwinds dsDNA until it encounters a Chi (crossover hotspot instigator) sequence from the 3' direction. Cuts ssDNA a few nucleotides 3' to the Chi site. The properties and activities of the enzyme are changed at Chi. The Chi-altered holoenzyme produces a long 3'-ssDNA overhang and facilitates RecA-binding to the ssDNA for homologous DNA recombination and repair. Holoenzyme degrades any linearized DNA that is unable to undergo homologous recombination. In the holoenzyme this subunit has ssDNA-dependent ATPase and 5'-3' helicase activity. When added to pre-assembled RecBC greatly stimulates nuclease activity and augments holoenzyme processivity. Negatively regulates the RecA-loading ability of RecBCD. The chain is RecBCD enzyme subunit RecD from Buchnera aphidicola subsp. Acyrthosiphon pisum (strain APS) (Acyrthosiphon pisum symbiotic bacterium).